Consider the following 231-residue polypeptide: Transmembrane protein 225 (231 aa).

Residues 1–13 are Cytoplasmic-facing; that stretch reads MVHILVRKVEATN. A helical transmembrane segment spans residues 14–34; sequence MFFSSWTLVFLAVGIIIEEWA. Residues 35–67 are Extracellular-facing; the sequence is ELKLGPQKPTITHSPWICCTPLWPSDGLEVIRN. Residues 68–88 traverse the membrane as a helical segment; it reads ILIVVLSLSFMHNLLLGFEFT. Over 89–97 the chain is Cytoplasmic; the sequence is YMIPQTKYT. The helical transmembrane segment at 98–118 threads the bilayer; it reads LIMTACLAFLTGILLLGALLL. The Extracellular segment spans residues 119 to 135; that stretch reads YHHMLRQGESVYYSSYK. The chain crosses the membrane as a helical span at residues 136–156; it reads ISWIIFTAYLNVLFLFISGFL. The Cytoplasmic segment spans residues 157 to 231; it reads SLLQYKQPID…IQARRVTWAL (75 aa). An RVxF motif is present at residues 225 to 229; it reads RRVTW.

Interacts (via RVxF motif) with PPP1CC.

It is found in the cytoplasmic vesicle. Its subcellular location is the secretory vesicle. The protein localises to the acrosome membrane. Functionally, probably inhibits protein phosphatase 1 (PP1) in sperm via binding to catalytic subunit PPP1CC. The protein is Transmembrane protein 225 (TMEM225) of Bos taurus (Bovine).